The sequence spans 585 residues: L-gulonolactone oxidase 3 (585 aa).

The N-terminal stretch at Met1–Ser24 is a signal peptide. The FAD-binding PCMH-type domain maps to Lys51–Ala233.

The protein belongs to the oxygen-dependent FAD-linked oxidoreductase family. FAD serves as cofactor.

The protein resides in the vacuole. It catalyses the reaction L-gulono-1,4-lactone + O2 = L-ascorbate + H2O2 + H(+). It functions in the pathway cofactor biosynthesis; L-ascorbate biosynthesis. Its function is as follows. Catalyzes the oxidation of L-gulono-1,4-lactone to ascorbic acid. L-gulono-1,4-lactone is oxidized to hydrogen peroxide and L-xylo-hexulonolactone which spontaneously isomerizes to L-ascorbate. This Arabidopsis thaliana (Mouse-ear cress) protein is L-gulonolactone oxidase 3.